Consider the following 154-residue polypeptide: Cytochrome c-type biogenesis protein CcmE (154 aa).

Over 1 to 8 (MHPQRKQR) the chain is Cytoplasmic. The chain crosses the membrane as a helical; Signal-anchor for type II membrane protein span at residues 9 to 29 (LMIVLFIVVFSSLAVGLIAYA). The Periplasmic segment spans residues 30–154 (LRENINLFYP…ATCGGLNYGA (125 aa)). Residues H124 and Y128 each coordinate heme.

The protein belongs to the CcmE/CycJ family.

The protein resides in the cell inner membrane. Functionally, heme chaperone required for the biogenesis of c-type cytochromes. Transiently binds heme delivered by CcmC and transfers the heme to apo-cytochromes in a process facilitated by CcmF and CcmH. In Cellvibrio japonicus (strain Ueda107) (Pseudomonas fluorescens subsp. cellulosa), this protein is Cytochrome c-type biogenesis protein CcmE.